We begin with the raw amino-acid sequence, 428 residues long: Chaperone SurA (428 aa).

The first 19 residues, 1–19 (MNIWKTLLLGMLVTGSAVS), serve as a signal peptide directing secretion. 2 consecutive PpiC domains span residues 170–268 (SVEY…KIED) and 277–377 (VTEV…EVLD).

The protein resides in the periplasm. It catalyses the reaction [protein]-peptidylproline (omega=180) = [protein]-peptidylproline (omega=0). Its function is as follows. Chaperone involved in the correct folding and assembly of outer membrane proteins. Recognizes specific patterns of aromatic residues and the orientation of their side chains, which are found more frequently in integral outer membrane proteins. May act in both early periplasmic and late outer membrane-associated steps of protein maturation. In Vibrio vulnificus (strain CMCP6), this protein is Chaperone SurA.